We begin with the raw amino-acid sequence, 340 residues long: Anthranilate phosphoribosyltransferase (340 aa).

5-phospho-alpha-D-ribose 1-diphosphate is bound by residues Gly83, 86-87, Thr91, 93-96, 111-119, and Ser123; these read GD, NVST, and KHGNRSVSS. Gly83 provides a ligand contact to anthranilate. Ser95 is a Mg(2+) binding site. Asn114 serves as a coordination point for anthranilate. Residue Arg169 participates in anthranilate binding. Mg(2+) contacts are provided by Asp228 and Glu229.

The protein belongs to the anthranilate phosphoribosyltransferase family. Homodimer. It depends on Mg(2+) as a cofactor.

It carries out the reaction N-(5-phospho-beta-D-ribosyl)anthranilate + diphosphate = 5-phospho-alpha-D-ribose 1-diphosphate + anthranilate. The protein operates within amino-acid biosynthesis; L-tryptophan biosynthesis; L-tryptophan from chorismate: step 2/5. Catalyzes the transfer of the phosphoribosyl group of 5-phosphorylribose-1-pyrophosphate (PRPP) to anthranilate to yield N-(5'-phosphoribosyl)-anthranilate (PRA). This is Anthranilate phosphoribosyltransferase from Aquifex aeolicus (strain VF5).